A 393-amino-acid polypeptide reads, in one-letter code: Elongation factor Tu (393 aa).

A tr-type G domain is found at 10-203; sequence KPHVNIGTIG…AVDSFIPDPV (194 aa). The segment at 19–26 is G1; sequence GHVDHGKT. 19–26 contributes to the GTP binding site; sequence GHVDHGKT. Thr-26 serves as a coordination point for Mg(2+). The segment at 60-64 is G2; the sequence is GITIS. The interval 81–84 is G3; the sequence is DCPG. Residues 81 to 85 and 136 to 139 each bind GTP; these read DCPGH and NKVD. The tract at residues 136–139 is G4; the sequence is NKVD. The segment at 173 to 175 is G5; the sequence is SAL.

Belongs to the TRAFAC class translation factor GTPase superfamily. Classic translation factor GTPase family. EF-Tu/EF-1A subfamily. In terms of assembly, monomer.

The protein resides in the cytoplasm. It catalyses the reaction GTP + H2O = GDP + phosphate + H(+). GTP hydrolase that promotes the GTP-dependent binding of aminoacyl-tRNA to the A-site of ribosomes during protein biosynthesis. In Pelodictyon phaeoclathratiforme (strain DSM 5477 / BU-1), this protein is Elongation factor Tu.